Here is a 270-residue protein sequence, read N- to C-terminus: uncharacterized protein (270 aa).

Positions 1-22 are cleaved as a signal peptide; that stretch reads MGYIKRMALYMSVFLLIIFIVG. C23 carries N-palmitoyl cysteine lipidation. Residue C23 is the site of S-diacylglycerol cysteine attachment.

This sequence belongs to the staphylococcal tandem lipoprotein family.

The protein resides in the cell membrane. This is an uncharacterized protein from Staphylococcus aureus (strain COL).